The chain runs to 126 residues: Aspartate 1-decarboxylase (126 aa).

Catalysis depends on S25, which acts as the Schiff-base intermediate with substrate; via pyruvic acid. Pyruvic acid (Ser) is present on S25. T57 is a binding site for substrate. Residue Y58 is the Proton donor of the active site. 73–75 (GAA) serves as a coordination point for substrate.

The protein belongs to the PanD family. Heterooctamer of four alpha and four beta subunits. Pyruvate is required as a cofactor. In terms of processing, is synthesized initially as an inactive proenzyme, which is activated by self-cleavage at a specific serine bond to produce a beta-subunit with a hydroxyl group at its C-terminus and an alpha-subunit with a pyruvoyl group at its N-terminus.

It is found in the cytoplasm. It carries out the reaction L-aspartate + H(+) = beta-alanine + CO2. It participates in cofactor biosynthesis; (R)-pantothenate biosynthesis; beta-alanine from L-aspartate: step 1/1. Catalyzes the pyruvoyl-dependent decarboxylation of aspartate to produce beta-alanine. In Stutzerimonas stutzeri (strain A1501) (Pseudomonas stutzeri), this protein is Aspartate 1-decarboxylase.